We begin with the raw amino-acid sequence, 49 residues long: MADIITLACTECKQRNYTTTKNKKTKPERLEFNKYCRFCRKHTPHRETK.

The protein belongs to the bacterial ribosomal protein bL33 family.

In Syntrophotalea carbinolica (strain DSM 2380 / NBRC 103641 / GraBd1) (Pelobacter carbinolicus), this protein is Large ribosomal subunit protein bL33.